A 115-amino-acid chain; its full sequence is Large ribosomal subunit protein uL22 (115 aa).

This sequence belongs to the universal ribosomal protein uL22 family. As to quaternary structure, part of the 50S ribosomal subunit.

In terms of biological role, this protein binds specifically to 23S rRNA; its binding is stimulated by other ribosomal proteins, e.g. L4, L17, and L20. It is important during the early stages of 50S assembly. It makes multiple contacts with different domains of the 23S rRNA in the assembled 50S subunit and ribosome. Its function is as follows. The globular domain of the protein is located near the polypeptide exit tunnel on the outside of the subunit, while an extended beta-hairpin is found that lines the wall of the exit tunnel in the center of the 70S ribosome. This Ligilactobacillus salivarius (strain UCC118) (Lactobacillus salivarius) protein is Large ribosomal subunit protein uL22.